A 455-amino-acid chain; its full sequence is tRNA modification GTPase MnmE (455 aa).

Residues Arg24, Glu81, and Lys120 each coordinate (6S)-5-formyl-5,6,7,8-tetrahydrofolate. In terms of domain architecture, TrmE-type G spans 216-378 (GMTVVIAGRP…LREHLKACMG (163 aa)). Asn226 lines the K(+) pocket. GTP contacts are provided by residues 226-231 (NAGKSS), 245-251 (TDIAGTT), 270-273 (DTAG), and 335-338 (NKAD). A Mg(2+)-binding site is contributed by Ser230. Residues Thr245, Ile247, and Thr250 each contribute to the K(+) site. Thr251 lines the Mg(2+) pocket. Lys455 serves as a coordination point for (6S)-5-formyl-5,6,7,8-tetrahydrofolate.

Belongs to the TRAFAC class TrmE-Era-EngA-EngB-Septin-like GTPase superfamily. TrmE GTPase family. As to quaternary structure, homodimer. Heterotetramer of two MnmE and two MnmG subunits. The cofactor is K(+).

Its subcellular location is the cytoplasm. Exhibits a very high intrinsic GTPase hydrolysis rate. Involved in the addition of a carboxymethylaminomethyl (cmnm) group at the wobble position (U34) of certain tRNAs, forming tRNA-cmnm(5)s(2)U34. This chain is tRNA modification GTPase MnmE, found in Ectopseudomonas mendocina (strain ymp) (Pseudomonas mendocina).